Reading from the N-terminus, the 94-residue chain is Large ribosomal subunit protein bL25 (94 aa).

This sequence belongs to the bacterial ribosomal protein bL25 family. In terms of assembly, part of the 50S ribosomal subunit; part of the 5S rRNA/L5/L18/L25 subcomplex. Contacts the 5S rRNA. Binds to the 5S rRNA independently of L5 and L18.

Functionally, this is one of the proteins that binds to the 5S RNA in the ribosome where it forms part of the central protuberance. This chain is Large ribosomal subunit protein bL25, found in Klebsiella pneumoniae subsp. pneumoniae (strain ATCC 700721 / MGH 78578).